A 318-amino-acid polypeptide reads, in one-letter code: UDP-N-acetylenolpyruvoylglucosamine reductase (318 aa).

The FAD-binding PCMH-type domain maps to 38–204; sequence IGGICPVVVE…LGIEILLKEG (167 aa). Arg182 is a catalytic residue. Residues 212–232 form a disordered region; sequence SLKDKRDRRNSSQPENKKSAG. Positions 213 to 229 are enriched in basic and acidic residues; it reads LKDKRDRRNSSQPENKK. Ser233 functions as the Proton donor in the catalytic mechanism. Glu310 is a catalytic residue.

It belongs to the MurB family. FAD serves as cofactor.

It is found in the cytoplasm. It catalyses the reaction UDP-N-acetyl-alpha-D-muramate + NADP(+) = UDP-N-acetyl-3-O-(1-carboxyvinyl)-alpha-D-glucosamine + NADPH + H(+). The protein operates within cell wall biogenesis; peptidoglycan biosynthesis. In terms of biological role, cell wall formation. In Leptospira borgpetersenii serovar Hardjo-bovis (strain JB197), this protein is UDP-N-acetylenolpyruvoylglucosamine reductase.